A 445-amino-acid polypeptide reads, in one-letter code: Argininosuccinate synthase (445 aa).

ATP-binding positions include 17–25 (AFSGGLDTS) and alanine 43. Tyrosine 99 provides a ligand contact to L-citrulline. Residues glycine 129 and threonine 131 each contribute to the ATP site. The L-aspartate site is built by threonine 131, asparagine 135, and aspartate 136. Asparagine 135 contacts L-citrulline. Aspartate 136 is an ATP binding site. L-citrulline is bound by residues arginine 139 and serine 192. Position 194 (aspartate 194) interacts with ATP. Threonine 201, glutamate 203, and glutamate 280 together coordinate L-citrulline.

Belongs to the argininosuccinate synthase family. Type 2 subfamily. As to quaternary structure, homotetramer.

Its subcellular location is the cytoplasm. The catalysed reaction is L-citrulline + L-aspartate + ATP = 2-(N(omega)-L-arginino)succinate + AMP + diphosphate + H(+). The protein operates within amino-acid biosynthesis; L-arginine biosynthesis; L-arginine from L-ornithine and carbamoyl phosphate: step 2/3. In Rhodopseudomonas palustris (strain BisB5), this protein is Argininosuccinate synthase.